The primary structure comprises 223 residues: MAVLSSRAMRAALGLAVLAVVIQLLRTWLSSKSYLFNQKDIAELAKQHAGMDFEVAFSKIIVELRKKHPGHILPDEDLQWIFVNAGGWMGSMCLLHASLTEYILLFGTAIDTGGHSGRYWADISDTVITGTFRQWKEGTTKSEVFYPGDTIVHVAGEATSVHWSGGTWMVEYGRGFIPSTMGFALADTIFSTQDFCTLFYTFRIYARCLLLETHTYLSELGLS.

Over 1–7 the chain is Lumenal; it reads MAVLSSR. A helical transmembrane segment spans residues 8 to 29; the sequence is AMRAALGLAVLAVVIQLLRTWL. At 30-223 the chain is on the cytoplasmic side; it reads SSKSYLFNQK…HTYLSELGLS (194 aa). The interval 98–105 is important for ligand-binding; it reads SLTEYILL. Residues 176-223 are C-terminal hydrophobic region; that stretch reads FIPSTMGFALADTIFSTQDFCTLFYTFRIYARCLLLETHTYLSELGLS.

Belongs to the ERG2 family. Homotrimer.

The protein localises to the nucleus inner membrane. It localises to the nucleus outer membrane. Its subcellular location is the nucleus envelope. It is found in the cytoplasmic vesicle. The protein resides in the endoplasmic reticulum membrane. The protein localises to the membrane. Functionally, may function in lipid transport from the endoplasmic reticulum and be involved in a wide array of cellular functions probably through regulation of the biogenesis of lipid microdomains at the plasma membrane. May regulate calcium efflux at the endoplasmic reticulum. In Taricha granulosa (Roughskin newt), this protein is Sigma non-opioid intracellular receptor 1 (SIGMAR1).